The chain runs to 586 residues: Aspartate--tRNA(Asp/Asn) ligase (586 aa).

Position 176 (Glu176) interacts with L-aspartate. An aspartate region spans residues 200 to 203 (QIFK). Arg222 provides a ligand contact to L-aspartate. ATP-binding positions include 222-224 (RDE) and Gln231. His449 contributes to the L-aspartate binding site. Glu483 serves as a coordination point for ATP. An L-aspartate-binding site is contributed by Arg490. Residue 535-538 (GIDR) participates in ATP binding.

Belongs to the class-II aminoacyl-tRNA synthetase family. Type 1 subfamily. In terms of assembly, homodimer.

It localises to the cytoplasm. The enzyme catalyses tRNA(Asx) + L-aspartate + ATP = L-aspartyl-tRNA(Asx) + AMP + diphosphate. In terms of biological role, aspartyl-tRNA synthetase with relaxed tRNA specificity since it is able to aspartylate not only its cognate tRNA(Asp) but also tRNA(Asn). Reaction proceeds in two steps: L-aspartate is first activated by ATP to form Asp-AMP and then transferred to the acceptor end of tRNA(Asp/Asn). This Brachyspira hyodysenteriae (strain ATCC 49526 / WA1) protein is Aspartate--tRNA(Asp/Asn) ligase.